Reading from the N-terminus, the 777-residue chain is MDSKESLTPGREENPSSVLAQERGNVMDFYKTLRGGATVKVSASSPSLAVASQSDSKQRRLLVDFPKGSVSNAQQPDLSKAVSLSMGLYMGETETKVMGNDLGFPQQGQISLSSGETDLKLLEESIANLNRSTSVPENPKSSASTAVSAAPTEKEFPKTHSDISSEQQHLKGQTGTNGGNVKLYTTDQSTFDILQDLEFSSGSPGKETNESPWRSDLLIDENCLLSPLAGEDDSFLLEGNSNEDCKPLILPDTKPKIKDNGDLVLSSPSNVTLPQVKTEKEDFIELCTPGVIKQEKLGTVYCQAGFPGANIIGNKMSAISVHGVSTSGGQMYHYDMNTASLSQQQDQKPIFNVIPPIPVGSENWNRCQGSGDDNLTSLGTLNFPGRTVFSNGYSSPSMRPDVSSPPSSSSTATTGPPPKLCLVCSDEASGCHYGVLTCGSCKVFFKRAVEGQHNYLCAGRNDCIIDKIRRKNCPACRYRKCLQAGMNLEARKTKKKIKGIQQATTGVSQETPENPANKTIVPATLPQLTPTLVSLLEVIEPEVLYAGYDSSVPDSTWRIMTTLNMLGGRQVIAAVKWAKAIPGFRNLHLDDQMTLLQYSWMFLMAFALGWRSYRQSSANLLCFAPDLIINEQRMTLPCMYDQCKHMLYVSSELHRLQVSYEEYLCMKTLLLLSSVPKDGLKSQELFDEIRMTYIKELGKAIVKREGNSSQNWQRFYQLTKLLDSMHEVVENLLNYCFQTFLDKTMSIEFPEMLAEIITNQIPKYSNGNIKKLLFHQK.

Over residues 1–14 the composition is skewed to basic and acidic residues; that stretch reads MDSKESLTPGREEN. Residues 1-23 are disordered; the sequence is MDSKESLTPGREENPSSVLAQER. The tract at residues 1 to 420 is modulating; sequence MDSKESLTPG…TATTGPPPKL (420 aa). Threonine 8 is subject to Phosphothreonine. Arginine 23 is subject to Omega-N-methylarginine. Phosphoserine is present on residues serine 45, serine 113, serine 134, and serine 141. A compositionally biased stretch (polar residues) spans 130-140; that stretch reads NRSTSVPENPK. Residues 130-183 are disordered; that stretch reads NRSTSVPENPKSSASTAVSAAPTEKEFPKTHSDISSEQQHLKGQTGTNGGNVKL. A compositionally biased stretch (low complexity) spans 141 to 150; that stretch reads SSASTAVSAA. A compositionally biased stretch (basic and acidic residues) spans 152-163; it reads TEKEFPKTHSDI. A compositionally biased stretch (polar residues) spans 164 to 174; the sequence is SSEQQHLKGQT. A phosphoserine mark is found at serine 203, serine 211, and serine 226. Lysine 258 is covalently cross-linked (Glycyl lysine isopeptide (Lys-Gly) (interchain with G-Cter in SUMO2)). Serine 267 is subject to Phosphoserine. Glycyl lysine isopeptide (Lys-Gly) (interchain with G-Cter in SUMO); alternate cross-links involve residues lysine 277 and lysine 293. Residues lysine 277 and lysine 293 each participate in a glycyl lysine isopeptide (Lys-Gly) (interchain with G-Cter in SUMO2); alternate cross-link. A compositionally biased stretch (low complexity) spans 394-414; the sequence is SSPSMRPDVSSPPSSSSTATT. The interval 394 to 415 is disordered; the sequence is SSPSMRPDVSSPPSSSSTATTG. Position 404 is a phosphoserine (serine 404). Residue lysine 419 forms a Glycyl lysine isopeptide (Lys-Gly) (interchain with G-Cter in ubiquitin) linkage. NR C4-type zinc fingers lie at residues 421-441 and 457-476; these read CLVC…CGSC and CAGR…CPAC. The nuclear receptor DNA-binding region spans 421-486; sequence CLVCSDEASG…RYRKCLQAGM (66 aa). Lysine 480, lysine 492, lysine 494, and lysine 495 each carry N6-acetyllysine. The interaction with CLOCK stretch occupies residues 485–777; it reads GMNLEARKTK…NIKKLLFHQK (293 aa). Positions 487-523 are hinge; it reads NLEARKTKKKIKGIQQATTGVSQETPENPANKTIVPA. The region spanning 524 to 758 is the NR LBD domain; it reads TLPQLTPTLV…FPEMLAEIIT (235 aa). An interaction with CRY1 region spans residues 532 to 697; the sequence is LVSLLEVIEP…EIRMTYIKEL (166 aa). Residue lysine 703 forms a Glycyl lysine isopeptide (Lys-Gly) (interchain with G-Cter in SUMO) linkage.

It belongs to the nuclear hormone receptor family. NR3 subfamily. Heteromultimeric cytoplasmic complex with HSP90AA1, HSPA1A/HSPA1B, and FKBP5 or another immunophilin such as PPID, STIP1, or the immunophilin homolog PPP5C. Upon ligand binding FKBP5 dissociates from the complex and FKBP4 takes its place, thereby linking the complex to dynein and mediating transport to the nucleus, where the complex dissociates. Probably forms a complex composed of chaperones HSP90 and HSP70, co-chaperones CDC37, PPP5C, TSC1 and client protein TSC2, CDK4, AKT, RAF1 and NR3C1; this complex does not contain co-chaperones STIP1/HOP and PTGES3/p23. Directly interacts with UNC45A. Binds to DNA as a homodimer, and as heterodimer with NR3C2 or the retinoid X receptor. Binds STAT5A and STAT5B homodimers and heterodimers. Interacts with NRIP1, POU2F1, POU2F2 and TRIM28. Interacts with several coactivator complexes, including the SMARCA4 complex, CREBBP/EP300, TADA2L (Ada complex) and p160 coactivators such as NCOA2 and NCOA6. Interaction with BAG1 inhibits transactivation. Interacts with HEXIM1 and TGFB1I1. Interacts with NCOA1. Interacts with NCOA3, SMARCA4, SMARCC1, SMARCD1, and SMARCE1. Interacts with CLOCK, CRY1 and CRY2 in a ligand-dependent fashion. Interacts with CIART. Interacts with RWDD3. Interacts with UBE2I/UBC9 and this interaction is enhanced in the presence of RWDD3. Interacts with GRIP1. Interacts with NR4A3 (via nuclear receptor DNA-binding domain), represses transcription activity of NR4A3 on the POMC promoter Nur response element (NurRE). Directly interacts with PNRC2 to attract and form a complex with UPF1 and DCP1A; the interaction leads to rapid mRNA degradation. Interacts with GSK3B. Interacts with FNIP1 and FNIP2. Interacts (via C-terminus) with HNRNPU (via C-terminus). Interacts with MCM3AP. Interacts (via domain NR LBD) with HSP90AA1 and HSP90AB1. In the absence of hormonal ligand, interacts with TACC1. Interacts (via NR LBD domain) with ZNF764 (via KRAB domain); the interaction regulates transcription factor activity of NR3C1 by directing its actions toward certain biologic pathways. Acetylation by CLOCK reduces its binding to glucocorticoid response elements and its transcriptional activity. Post-translationally, increased proteasome-mediated degradation in response to glucocorticoids. In terms of processing, phosphorylated in the absence of hormone; becomes hyperphosphorylated in the presence of glucocorticoid. The Ser-203, Ser-226 and Ser-404-phosphorylated forms are mainly cytoplasmic, and the Ser-211-phosphorylated form is nuclear. Phosphorylation at Ser-211 increases transcriptional activity. Phosphorylation at Ser-203, Ser-226 and Ser-404 decreases signaling capacity. Phosphorylation at Ser-404 may protect from glucocorticoid-induced apoptosis. Phosphorylation at Ser-203 and Ser-211 is not required in regulation of chromosome segregation. May be dephosphorylated by PPP5C, attenuates NR3C1 action. Ubiquitinated by UBR5, leading to its degradation: UBR5 specifically recognizes and binds ligand-bound NR3C1 when it is not associated with coactivators (NCOAs). In presence of NCOAs, the UBR5-degron is not accessible, preventing its ubiquitination and degradation. Post-translationally, sumoylation at Lys-277 and Lys-293 negatively regulates its transcriptional activity. Sumoylation at Lys-703 positively regulates its transcriptional activity in the presence of RWDD3. Sumoylation at Lys-277 and Lys-293 is dispensable whereas sumoylation at Lys-703 is critical for the stimulatory effect of RWDD3 on its transcriptional activity. Heat shock increases sumoylation in a RWDD3-dependent manner.

Its subcellular location is the cytoplasm. It localises to the nucleus. It is found in the mitochondrion. The protein localises to the cytoskeleton. The protein resides in the spindle. Its subcellular location is the microtubule organizing center. It localises to the centrosome. It is found in the chromosome. The protein localises to the nucleoplasm. Functionally, receptor for glucocorticoids (GC). Has a dual mode of action: as a transcription factor that binds to glucocorticoid response elements (GRE), both for nuclear and mitochondrial DNA, and as a modulator of other transcription factors. Affects inflammatory responses, cellular proliferation and differentiation in target tissues. Involved in chromatin remodeling. Plays a role in rapid mRNA degradation by binding to the 5' UTR of target mRNAs and interacting with PNRC2 in a ligand-dependent manner which recruits the RNA helicase UPF1 and the mRNA-decapping enzyme DCP1A, leading to RNA decay. Could act as a coactivator for STAT5-dependent transcription upon growth hormone (GH) stimulation and could reveal an essential role of hepatic GR in the control of body growth. Mediates glucocorticoid-induced apoptosis. Promotes accurate chromosome segregation during mitosis. May act as a tumor suppressor. May play a negative role in adipogenesis through the regulation of lipolytic and antilipogenic gene expression. The protein is Glucocorticoid receptor (NR3C1) of Pongo abelii (Sumatran orangutan).